The primary structure comprises 418 residues: ATP-dependent Clp protease ATP-binding subunit ClpX (418 aa).

Positions 1–54 (MTRKDDESDQFFCSFCGKNQKEVKKLIAGPSVYICNECVSLCEEIIEDEDKESL) constitute a ClpX-type ZB domain. Zn(2+) contacts are provided by Cys13, Cys16, Cys35, and Cys38. Position 120 to 127 (120 to 127 (PTGCGKTL)) interacts with ATP.

It belongs to the ClpX chaperone family. Component of the ClpX-ClpP complex. Forms a hexameric ring that, in the presence of ATP, binds to fourteen ClpP subunits assembled into a disk-like structure with a central cavity, resembling the structure of eukaryotic proteasomes.

ATP-dependent specificity component of the Clp protease. It directs the protease to specific substrates. Can perform chaperone functions in the absence of ClpP. This Desulforapulum autotrophicum (strain ATCC 43914 / DSM 3382 / VKM B-1955 / HRM2) (Desulfobacterium autotrophicum) protein is ATP-dependent Clp protease ATP-binding subunit ClpX.